The chain runs to 239 residues: Large ribosomal subunit protein uL2 (239 aa).

Disordered regions lie at residues 1-20 (MGHR…YRAP) and 202-239 (FGGG…RRKR).

The protein belongs to the universal ribosomal protein uL2 family. In terms of assembly, part of the 50S ribosomal subunit. Forms a bridge to the 30S subunit in the 70S ribosome.

In terms of biological role, one of the primary rRNA binding proteins. Required for association of the 30S and 50S subunits to form the 70S ribosome, for tRNA binding and peptide bond formation. It has been suggested to have peptidyltransferase activity; this is somewhat controversial. Makes several contacts with the 16S rRNA in the 70S ribosome. The polypeptide is Large ribosomal subunit protein uL2 (Methanosphaerula palustris (strain ATCC BAA-1556 / DSM 19958 / E1-9c)).